We begin with the raw amino-acid sequence, 500 residues long: Probable betaine aldehyde dehydrogenase (500 aa).

249–254 (GSLATG) lines the NAD(+) pocket. Glutamate 271 (proton acceptor) is an active-site residue. Cysteine 305 serves as the catalytic Nucleophile.

The protein belongs to the aldehyde dehydrogenase family.

It catalyses the reaction betaine aldehyde + NAD(+) + H2O = glycine betaine + NADH + 2 H(+). The protein operates within amine and polyamine biosynthesis; betaine biosynthesis via choline pathway; betaine from betaine aldehyde: step 1/1. The chain is Probable betaine aldehyde dehydrogenase (meu8) from Schizosaccharomyces pombe (strain 972 / ATCC 24843) (Fission yeast).